The sequence spans 154 residues: 6,7-dimethyl-8-ribityllumazine synthase (154 aa).

Residues F22, 57 to 59 (AYE), and 81 to 83 (AVI) contribute to the 5-amino-6-(D-ribitylamino)uracil site. 86 to 87 (GT) contacts (2S)-2-hydroxy-3-oxobutyl phosphate. Catalysis depends on H89, which acts as the Proton donor. Position 114 (F114) interacts with 5-amino-6-(D-ribitylamino)uracil. (2S)-2-hydroxy-3-oxobutyl phosphate is bound at residue R128.

This sequence belongs to the DMRL synthase family. Forms an icosahedral capsid composed of 60 subunits, arranged as a dodecamer of pentamers.

The enzyme catalyses (2S)-2-hydroxy-3-oxobutyl phosphate + 5-amino-6-(D-ribitylamino)uracil = 6,7-dimethyl-8-(1-D-ribityl)lumazine + phosphate + 2 H2O + H(+). It participates in cofactor biosynthesis; riboflavin biosynthesis; riboflavin from 2-hydroxy-3-oxobutyl phosphate and 5-amino-6-(D-ribitylamino)uracil: step 1/2. Catalyzes the formation of 6,7-dimethyl-8-ribityllumazine by condensation of 5-amino-6-(D-ribitylamino)uracil with 3,4-dihydroxy-2-butanone 4-phosphate. This is the penultimate step in the biosynthesis of riboflavin. The chain is 6,7-dimethyl-8-ribityllumazine synthase from Idiomarina loihiensis (strain ATCC BAA-735 / DSM 15497 / L2-TR).